The chain runs to 354 residues: Methionine import ATP-binding protein MetN (354 aa).

The ABC transporter domain maps to 8–250 (LDHIDITFRQ…PKEALTQEFI (243 aa)). 42–49 (GYSGAGKS) contributes to the ATP binding site.

Belongs to the ABC transporter superfamily. Methionine importer (TC 3.A.1.24) family. In terms of assembly, the complex is composed of two ATP-binding proteins (MetN), two transmembrane proteins (MetI) and a solute-binding protein (MetQ).

It is found in the cell membrane. The enzyme catalyses L-methionine(out) + ATP + H2O = L-methionine(in) + ADP + phosphate + H(+). It carries out the reaction D-methionine(out) + ATP + H2O = D-methionine(in) + ADP + phosphate + H(+). Functionally, part of the ABC transporter complex MetNIQ involved in methionine import. Responsible for energy coupling to the transport system. The polypeptide is Methionine import ATP-binding protein MetN (Streptococcus pyogenes serotype M2 (strain MGAS10270)).